The chain runs to 406 residues: Peptidase T (406 aa).

His-82 lines the Zn(2+) pocket. The active site involves Asp-84. Asp-142 is a binding site for Zn(2+). Residue Glu-176 is the Proton acceptor of the active site. Zn(2+) contacts are provided by Glu-177, Asp-199, and His-381.

This sequence belongs to the peptidase M20B family. Zn(2+) serves as cofactor.

The protein localises to the cytoplasm. It carries out the reaction Release of the N-terminal residue from a tripeptide.. Functionally, cleaves the N-terminal amino acid of tripeptides. The sequence is that of Peptidase T from Streptococcus agalactiae serotype Ia (strain ATCC 27591 / A909 / CDC SS700).